We begin with the raw amino-acid sequence, 454 residues long: Tubulin alpha chain (454 aa).

Positions 12, 72, 141, 145, 146, 180, 207, and 229 each coordinate GTP. Asp-72 lines the Mg(2+) pocket. The active site involves Glu-255.

This sequence belongs to the tubulin family. In terms of assembly, dimer of alpha and beta chains. A typical microtubule is a hollow water-filled tube with an outer diameter of 25 nm and an inner diameter of 15 nM. Alpha-beta heterodimers associate head-to-tail to form protofilaments running lengthwise along the microtubule wall with the beta-tubulin subunit facing the microtubule plus end conferring a structural polarity. Microtubules usually have 13 protofilaments but different protofilament numbers can be found in some organisms and specialized cells. Requires Mg(2+) as cofactor.

The protein localises to the cytoplasm. It localises to the cytoskeleton. The enzyme catalyses GTP + H2O = GDP + phosphate + H(+). In terms of biological role, tubulin is the major constituent of microtubules, a cylinder consisting of laterally associated linear protofilaments composed of alpha- and beta-tubulin heterodimers. Microtubules grow by the addition of GTP-tubulin dimers to the microtubule end, where a stabilizing cap forms. Below the cap, tubulin dimers are in GDP-bound state, owing to GTPase activity of alpha-tubulin. In Colletotrichum orbiculare (strain 104-T / ATCC 96160 / CBS 514.97 / LARS 414 / MAFF 240422) (Cucumber anthracnose fungus), this protein is Tubulin alpha chain (TUB1).